We begin with the raw amino-acid sequence, 406 residues long: Putative permease Rv2963 (406 aa).

Helical transmembrane passes span tryptophan 30 to valine 50, leucine 67 to leucine 87, leucine 111 to glutamate 131, phenylalanine 132 to alanine 152, leucine 208 to valine 228, alanine 246 to glycine 266, glycine 278 to leucine 298, valine 312 to phenylalanine 332, and valine 361 to proline 381.

This sequence belongs to the UPF0718 family.

The protein resides in the cell membrane. The polypeptide is Putative permease Rv2963 (Mycobacterium tuberculosis (strain ATCC 25618 / H37Rv)).